Reading from the N-terminus, the 298-residue chain is Transcription factor RHD6 (298 aa).

Disordered regions lie at residues 1-58 (MALV…SDHQ) and 157-213 (TGSR…AKNR). A compositionally biased stretch (low complexity) spans 15–27 (SKQNSSSSEDLSS). Composition is skewed to polar residues over residues 157-168 (TGSRNESLSPKS) and 177-190 (GESTQPSKKLSSGV). Low complexity predominate over residues 191 to 205 (TGKTKPKPTTSPKDP). The interval 201–214 (SPKDPQSLAAKNRR) is basic motif. The 50-residue stretch at 201 to 250 (SPKDPQSLAAKNRRERISERLKILQELVPNGTKVDLVTMLEKAISYVKFL) folds into the bHLH domain. Residues 215–250 (ERISERLKILQELVPNGTKVDLVTMLEKAISYVKFL) form a helix-loop-helix motif region.

Homodimer. Forms heterodimers with RSL1. Interacts with TIFY10B/JAZ2, TIFY6A/JAZ4, TIFY5A/JAZ8, TIFY7/JAZ9 and TIFY9/JAZ10. Expressed constitutively in flowers. Expressed in root epidermal hair cells.

Its subcellular location is the nucleus. Its function is as follows. Transcription factor that is specifically required for the development of root hairs. Acts with RSL1 to positively regulate root hair development. Acts downstream of genes that regulate epidermal pattern formation, such as GL2. Targets directly RSL4, another transcription factor involved in the regulation of root hair elongation. Acts with RSL1 as transcription factor that integrates a jasmonate (JA) signaling pathway that stimulates root hair growth. The chain is Transcription factor RHD6 from Arabidopsis thaliana (Mouse-ear cress).